Here is a 352-residue protein sequence, read N- to C-terminus: Protein RecA (352 aa).

Residue 67-74 participates in ATP binding; sequence GPESSGKT. A disordered region spans residues 330–352; it reads STPKPEAESQEKAAAAQDDDSLV.

Belongs to the RecA family.

It localises to the cytoplasm. In terms of biological role, can catalyze the hydrolysis of ATP in the presence of single-stranded DNA, the ATP-dependent uptake of single-stranded DNA by duplex DNA, and the ATP-dependent hybridization of homologous single-stranded DNAs. It interacts with LexA causing its activation and leading to its autocatalytic cleavage. The protein is Protein RecA of Chromohalobacter salexigens (strain ATCC BAA-138 / DSM 3043 / CIP 106854 / NCIMB 13768 / 1H11).